Here is an 839-residue protein sequence, read N- to C-terminus: Autophagy-related protein 9A (839 aa).

Alanine 2 carries the N-acetylalanine modification. Over 2-61 the chain is Cytoplasmic; that stretch reads AQFDTEYQRLEASYSDSPPGEEDLLVHVAEGSKSPWHHIENLDLFFSRVYNLHQKNGFTC. The short motif at 8 to 11 is the Tyrosine-based sorting signal element; it reads YQRL. Serine 14, serine 16, and serine 18 each carry phosphoserine. A helical transmembrane segment spans residues 62–84; sequence MLIGEMFELMQFLFVVAFTTFLV. The Lumenal segment spans residues 85–128; sequence SCVDYDILFANKMVNHSLHPTEPVKVTLPDAFLPAQVCSARIQE. Residue asparagine 99 is glycosylated (N-linked (GlcNAc...) asparagine). The helical transmembrane segment at 129–154 threads the bilayer; the sequence is NGSLITILVIAGVFWIHRLIKFIYNI. At 155–290 the chain is on the cytoplasmic side; sequence CCYWEIHSFY…ELAQRLSNRI (136 aa). Residues 291–301 lie within the membrane without spanning it; sequence LWIGIANFLLC. Over 302-319 the chain is Cytoplasmic; it reads PLILIWQILYAFFSYAEV. The stretch at 320–328 is an intramembrane region; sequence LKREPGALG. The Cytoplasmic portion of the chain corresponds to 329–371; the sequence is ARCWSLYGRCYLRHFNELEHELQSRLNRGYKPASKYMNCFLSP. A helical transmembrane segment spans residues 372 to 397; the sequence is LLTLLAKNGAFFAGSILAVLIALTIY. The Lumenal portion of the chain corresponds to 398-406; it reads DEDVLAVEH. Residues 407 to 424 traverse the membrane as a helical segment; the sequence is VLTTVTLLGVTVTVCRSF. The Cytoplasmic portion of the chain corresponds to 425–470; that stretch reads IPDQHMVFCPEQLLRVILAHIHYMPDHWQGNAHRSQTRDEFAQLFQ. An intramembrane segment occupies 471–480; the sequence is YKAVFILEEL. The Cytoplasmic portion of the chain corresponds to 481–483; the sequence is LSP. An intramembrane segment occupies 484–492; that stretch reads IVTPLILIF. The Cytoplasmic portion of the chain corresponds to 493–839; sequence CLRPRALEII…DELPPQVHKV (347 aa). Residue serine 656 is modified to Phosphoserine. 2 disordered regions span residues 657–686 and 717–839; these read PLQPGAAPQGRVPSTMTGSGVDARTASSGS and HKQQ…VHKV. The span at 724–736 shows a compositional bias: basic and acidic residues; that stretch reads EPERHVWHRRESD. Residues serine 735, serine 738, serine 741, and serine 828 each carry the phosphoserine modification. 2 stretches are compositionally biased toward acidic residues: residues 737-747 and 823-832; these read ESGESAPEEGG and VPEEGSEDEL.

Belongs to the ATG9 family. In terms of assembly, homotrimer; forms a homotrimer with a central pore that forms a path between the two membrane leaflets. Interacts (via cytoplasmic its C-terminus) with ATG2A. Interacts with SUPT20H. Interacts (via the tyrosine-based sorting signal motif) with AP4M1; promoting association with the AP-4 complex. Interacts with ARFIP1 and ARFIP2. Interacts with ATG4A; the interaction is direct and promotes ATG9A trafficking. Post-translationally, ufmylated in a DDRGK1 dependent manner.

The protein localises to the preautophagosomal structure membrane. It is found in the cytoplasmic vesicle. It localises to the autophagosome membrane. Its subcellular location is the golgi apparatus. The protein resides in the trans-Golgi network membrane. The protein localises to the late endosome membrane. It is found in the recycling endosome membrane. It localises to the endoplasmic reticulum membrane. Its subcellular location is the mitochondrion membrane. It catalyses the reaction a 1,2-diacyl-sn-glycero-3-phosphocholine(in) = a 1,2-diacyl-sn-glycero-3-phosphocholine(out). It carries out the reaction a 1,2-diacyl-sn-glycero-3-phospho-L-serine(in) = a 1,2-diacyl-sn-glycero-3-phospho-L-serine(out). The catalysed reaction is a 1,2-diacyl-sn-glycero-3-phosphoethanolamine(in) = a 1,2-diacyl-sn-glycero-3-phosphoethanolamine(out). Phospholipid scramblase involved in autophagy by mediating autophagosomal membrane expansion. Cycles between the preautophagosomal structure/phagophore assembly site (PAS) and the cytoplasmic vesicle pool and supplies membrane for the growing autophagosome. Lipid scramblase activity plays a key role in preautophagosomal structure/phagophore assembly by distributing the phospholipids that arrive through ATG2 (ATG2A or ATG2B) from the cytoplasmic to the luminal leaflet of the bilayer, thereby driving autophagosomal membrane expansion. Also required to supply phosphatidylinositol 4-phosphate to the autophagosome initiation site by recruiting the phosphatidylinositol 4-kinase beta (PI4KB) in a process dependent on ARFIP2, but not ARFIP1. In addition to autophagy, also plays a role in necrotic cell death. This is Autophagy-related protein 9A from Mus musculus (Mouse).